The following is a 530-amino-acid chain: CTP synthase (530 aa).

The interval 1 to 267 is amidoligase domain; sequence MTKYVFVTGG…DDFVLNHFKM (267 aa). S13 contributes to the CTP binding site. S13 is a binding site for UTP. 14–19 lines the ATP pocket; sequence SLGKGI. Position 54 (Y54) interacts with L-glutamine. An ATP-binding site is contributed by D71. Mg(2+) is bound by residues D71 and E141. CTP-binding positions include 148–150, 188–193, and K224; these read DIE and KTKPTQ. UTP contacts are provided by residues 188–193 and K224; that span reads KTKPTQ. 240–242 is an ATP binding site; that stretch reads RDA. Residues 292-530 form the Glutamine amidotransferase type-1 domain; the sequence is KIALVGKYIE…LFKAFIGATM (239 aa). G354 lines the L-glutamine pocket. C381 functions as the Nucleophile; for glutamine hydrolysis in the catalytic mechanism. Residues 382–385, E405, and R463 each bind L-glutamine; that span reads LGMQ. Active-site residues include H508 and E510.

This sequence belongs to the CTP synthase family. As to quaternary structure, homotetramer.

The enzyme catalyses UTP + L-glutamine + ATP + H2O = CTP + L-glutamate + ADP + phosphate + 2 H(+). It catalyses the reaction L-glutamine + H2O = L-glutamate + NH4(+). The catalysed reaction is UTP + NH4(+) + ATP = CTP + ADP + phosphate + 2 H(+). It participates in pyrimidine metabolism; CTP biosynthesis via de novo pathway; CTP from UDP: step 2/2. Its activity is regulated as follows. Allosterically activated by GTP, when glutamine is the substrate; GTP has no effect on the reaction when ammonia is the substrate. The allosteric effector GTP functions by stabilizing the protein conformation that binds the tetrahedral intermediate(s) formed during glutamine hydrolysis. Inhibited by the product CTP, via allosteric rather than competitive inhibition. Functionally, catalyzes the ATP-dependent amination of UTP to CTP with either L-glutamine or ammonia as the source of nitrogen. Regulates intracellular CTP levels through interactions with the four ribonucleotide triphosphates. The sequence is that of CTP synthase from Latilactobacillus sakei subsp. sakei (strain 23K) (Lactobacillus sakei subsp. sakei).